The chain runs to 239 residues: 7-cyano-7-deazaguanine synthase (239 aa).

7 to 17 (LSGGIDSSTLL) contributes to the ATP binding site. Residues Cys184, Cys192, Cys195, and Cys198 each coordinate Zn(2+).

The protein belongs to the QueC family. Requires Zn(2+) as cofactor.

The catalysed reaction is 7-carboxy-7-deazaguanine + NH4(+) + ATP = 7-cyano-7-deazaguanine + ADP + phosphate + H2O + H(+). Its pathway is purine metabolism; 7-cyano-7-deazaguanine biosynthesis. Catalyzes the ATP-dependent conversion of 7-carboxy-7-deazaguanine (CDG) to 7-cyano-7-deazaguanine (preQ(0)). This chain is 7-cyano-7-deazaguanine synthase, found in Archaeoglobus fulgidus (strain ATCC 49558 / DSM 4304 / JCM 9628 / NBRC 100126 / VC-16).